The sequence spans 421 residues: Gamma-glutamyl phosphate reductase (421 aa).

The protein belongs to the gamma-glutamyl phosphate reductase family.

The protein resides in the cytoplasm. The catalysed reaction is L-glutamate 5-semialdehyde + phosphate + NADP(+) = L-glutamyl 5-phosphate + NADPH + H(+). It participates in amino-acid biosynthesis; L-proline biosynthesis; L-glutamate 5-semialdehyde from L-glutamate: step 2/2. Functionally, catalyzes the NADPH-dependent reduction of L-glutamate 5-phosphate into L-glutamate 5-semialdehyde and phosphate. The product spontaneously undergoes cyclization to form 1-pyrroline-5-carboxylate. In Stutzerimonas stutzeri (strain A1501) (Pseudomonas stutzeri), this protein is Gamma-glutamyl phosphate reductase.